We begin with the raw amino-acid sequence, 554 residues long: Arginine--tRNA ligase (554 aa).

The 'HIGH' region motif lies at 129–139 (ANPTGPLHIGH).

Belongs to the class-I aminoacyl-tRNA synthetase family. Monomer.

The protein localises to the cytoplasm. It carries out the reaction tRNA(Arg) + L-arginine + ATP = L-arginyl-tRNA(Arg) + AMP + diphosphate. The chain is Arginine--tRNA ligase from Syntrophotalea carbinolica (strain DSM 2380 / NBRC 103641 / GraBd1) (Pelobacter carbinolicus).